The primary structure comprises 494 residues: Neuronal acetylcholine receptor subunit alpha-6 (494 aa).

An N-terminal signal peptide occupies residues 1–25; it reads MLTSKGQGFLHGGLCLWLCVFTPFF. Over 26–239 the chain is Extracellular; the sequence is KGCVGCATEE…ITYSFYIRRL (214 aa). 2 N-linked (GlcNAc...) asparagine glycosylation sites follow: N54 and N171. 2 disulfide bridges follow: C158–C172 and C222–C223. The next 3 helical transmembrane spans lie at 240–264, 272–290, and 306–327; these read PMFY…VFYL, VTLC…LVIT, and YLLF…VLNI. At 328–465 the chain is on the cytoplasmic side; it reads HYRTPTTHTM…WKYVAMVVDR (138 aa). A Phosphoserine modification is found at S401. A helical transmembrane segment spans residues 466–484; it reads VFLWVFIIVCVFGTAGLFL.

The protein belongs to the ligand-gated ion channel (TC 1.A.9) family. Acetylcholine receptor (TC 1.A.9.1) subfamily. Alpha-6/CHRNA6 sub-subfamily. As to quaternary structure, neuronal AChR is composed of two different types of subunits: alpha and non-alpha (beta). CHRNA6/alpha-6 subunit can be combined to CHRNB2/beta-2, CHRNA4/alpha-4 and CHRNB3/beta-3 to give rise to functional receptors. Heteropentamers containing CHRNB3 have an stoichiometry of (CHRNA6:CHRNB2)2:CHRNB3. Interacts with LYPD6.

It localises to the synaptic cell membrane. It catalyses the reaction Ca(2+)(in) = Ca(2+)(out). The catalysed reaction is K(+)(in) = K(+)(out). It carries out the reaction Na(+)(in) = Na(+)(out). Activated by a myriad of ligands such as acetylcholine, cytisine and nicotine. CHRNA6 nAChR activity is inhibited by the antagonists alpha-conotoxin MII and PIA, a small disulfide-constrained peptides from cone snails. Functionally, component of neuronal acetylcholine receptors (nAChRs) that function as pentameric, ligand-gated cation channels with high calcium permeability among other activities. nAChRs are excitatory neurotrasnmitter receptors formed by a collection of nAChR subunits known to mediate synaptic transmission in the nervous system and the neuromuscular junction. Each nAchR subunit confers differential attributes to channel properties, including activation, deactivation and desensitization kinetics, pH sensitivity, cation permeability, and binding to allosteric modulators. CHRNA6 forms pentameric channels with CHRNB2, CHRNB3 and CHRNA4 that exhibit high sensitivity to ACh and nicotine and are predominantly expressed in only a few brain areas, including dopaminergic neurons, norepirephrine neurons and cells of the visual system. nAChrs containing CHRNA6 subunits mediate endogenous cholinergic modulation of dopamine and gamma-aminobutyric acid (GABA) release in response to nicotine at nerve terminals. The polypeptide is Neuronal acetylcholine receptor subunit alpha-6 (Homo sapiens (Human)).